Reading from the N-terminus, the 559-residue chain is Formate--tetrahydrofolate ligase (559 aa).

68–75 (TPAGEGKT) lines the ATP pocket.

The protein belongs to the formate--tetrahydrofolate ligase family.

It carries out the reaction (6S)-5,6,7,8-tetrahydrofolate + formate + ATP = (6R)-10-formyltetrahydrofolate + ADP + phosphate. The protein operates within one-carbon metabolism; tetrahydrofolate interconversion. The sequence is that of Formate--tetrahydrofolate ligase from Rhizobium etli (strain CIAT 652).